Here is a 217-residue protein sequence, read N- to C-terminus: N-(5'-phosphoribosyl)anthranilate isomerase (217 aa).

The protein belongs to the TrpF family.

It catalyses the reaction N-(5-phospho-beta-D-ribosyl)anthranilate = 1-(2-carboxyphenylamino)-1-deoxy-D-ribulose 5-phosphate. It functions in the pathway amino-acid biosynthesis; L-tryptophan biosynthesis; L-tryptophan from chorismate: step 3/5. The polypeptide is N-(5'-phosphoribosyl)anthranilate isomerase (Bacillus velezensis (strain DSM 23117 / BGSC 10A6 / LMG 26770 / FZB42) (Bacillus amyloliquefaciens subsp. plantarum)).